Consider the following 71-residue polypeptide: Small ribosomal subunit protein bS21 (71 aa).

A disordered region spans residues 38–71 (YEKPTTERKRARASAIKRHAKKLARENARRTRLY). A compositionally biased stretch (basic residues) spans 46–59 (KRARASAIKRHAKK). Over residues 60-71 (LARENARRTRLY) the composition is skewed to basic and acidic residues.

It belongs to the bacterial ribosomal protein bS21 family.

The chain is Small ribosomal subunit protein bS21 from Hamiltonella defensa subsp. Acyrthosiphon pisum (strain 5AT).